Consider the following 384-residue polypeptide: MSLASVIHHGILPPAKSDRIFLTIPVFPPDFRARGWTKSPFSLLINPSLASAANRRLSHLPPIACSRGIDQEDEEKESRELLPHKNDENATTSRSSSSVDSGGLKDYQQEETYKTSFKTVALCVGTAVAFGIGIGLKEGVGKASEFFAGYILEQSLSVDNLFVFVLVFKYFKVPLMYQNKVLTYGIAGAIVFRFTLILLGTATLQKFEAVNLLLAAVLLYSSFKLFASEEDDTDLSDNFIVKTCQRFIPVTSSYDGNRFFTKHDGILKATPLLLTVAVIELSDIAFAVDSIPAVFGVTRDPFIVLTSNLFAILGLRSLYTLISEGMDELEYLQPSIAVVLGFIGVKMILDFFGFHISTEASLGVVALSLSTGVLLSLTNKSSDS.

Residues 1–48 (MSLASVIHHGILPPAKSDRIFLTIPVFPPDFRARGWTKSPFSLLINPS) constitute a chloroplast transit peptide. Topologically, residues 49–115 (LASAANRRLS…DYQQEETYKT (67 aa)) are stromal. A disordered region spans residues 68–104 (GIDQEDEEKESRELLPHKNDENATTSRSSSSVDSGGL). The segment covering 76-88 (KESRELLPHKNDE) has biased composition (basic and acidic residues). Residues 116 to 136 (SFKTVALCVGTAVAFGIGIGL) form a helical membrane-spanning segment. Topologically, residues 137–145 (KEGVGKASE) are lumenal, thylakoid. Residues 146–166 (FFAGYILEQSLSVDNLFVFVL) form a helical membrane-spanning segment. The Stromal portion of the chain corresponds to 167-180 (VFKYFKVPLMYQNK). A helical transmembrane segment spans residues 181-201 (VLTYGIAGAIVFRFTLILLGT). The Lumenal, thylakoid portion of the chain corresponds to 202–206 (ATLQK). Residues 207–227 (FEAVNLLLAAVLLYSSFKLFA) form a helical membrane-spanning segment. The Stromal segment spans residues 228-275 (SEEDDTDLSDNFIVKTCQRFIPVTSSYDGNRFFTKHDGILKATPLLLT). A helical membrane pass occupies residues 276 to 296 (VAVIELSDIAFAVDSIPAVFG). The Lumenal, thylakoid portion of the chain corresponds to 297-301 (VTRDP). Residues 302-322 (FIVLTSNLFAILGLRSLYTLI) traverse the membrane as a helical segment. Residues 323-335 (SEGMDELEYLQPS) are Stromal-facing. Residues 336–356 (IAVVLGFIGVKMILDFFGFHI) form a helical membrane-spanning segment. Ser-357 is a topological domain (lumenal, thylakoid). A helical membrane pass occupies residues 358 to 378 (TEASLGVVALSLSTGVLLSLT). The Stromal portion of the chain corresponds to 379–384 (NKSSDS).

Interacts with ALB3. As to expression, expressed in roots, rosette and cauline leaves, stems and flowers.

It is found in the plastid. It localises to the chloroplast thylakoid membrane. Integral thylakoid membrane protein that plays a crucial role in thylakoid membrane biogenesis and thylakoid formation in early chloroplast development. Is essential for de novo synthesis of photosystem II (PSII) core proteins and required for efficient insertion of thylakoid membrane proteins, presumably via interaction with ALB3. May assist synthesis of thylakoid membrane proteins at the membrane insertion step. The polypeptide is Thylakoid membrane protein TERC, chloroplastic (Arabidopsis thaliana (Mouse-ear cress)).